The primary structure comprises 368 residues: Peptide chain release factor 2 (368 aa).

At glutamine 250 the chain carries N5-methylglutamine.

This sequence belongs to the prokaryotic/mitochondrial release factor family. Post-translationally, methylated by PrmC. Methylation increases the termination efficiency of RF2.

Its subcellular location is the cytoplasm. Its function is as follows. Peptide chain release factor 2 directs the termination of translation in response to the peptide chain termination codons UGA and UAA. The protein is Peptide chain release factor 2 of Chlamydia trachomatis serovar L2 (strain ATCC VR-902B / DSM 19102 / 434/Bu).